Here is a 94-residue protein sequence, read N- to C-terminus: Probable FAD-linked sulfhydryl oxidase FPV093 (94 aa).

The region spanning 1 to 94 is the ERV/ALR sulfhydryl oxidase domain; sequence MDPRYWGSSF…IDIKKVKKLI (94 aa). C41 and C44 are oxidised to a cystine.

It belongs to the poxviruses E10 family. Requires FAD as cofactor.

The enzyme catalyses 2 R'C(R)SH + O2 = R'C(R)S-S(R)CR' + H2O2. Its function is as follows. FAD-dependent sulfhydryl oxidase that catalyzes disulfide bond formation. The sequence is that of Probable FAD-linked sulfhydryl oxidase FPV093 from Fowlpox virus (strain NVSL) (FPV).